Consider the following 549-residue polypeptide: Plant intracellular Ras-group-related LRR protein 4 (549 aa).

The segment covering 119–140 (SPSSNGSVSSRPPLPPATTTAA) has biased composition (low complexity). The tract at residues 119 to 167 (SPSSNGSVSSRPPLPPATTTAARSDSQSSLNFSERAPVRPKDMVSRDDS) is disordered. Residues 141-150 (RSDSQSSLNF) are compositionally biased toward polar residues. Residues 154 to 167 (APVRPKDMVSRDDS) show a composition bias toward basic and acidic residues. Residue serine 167 is modified to Phosphoserine. LRR repeat units follow at residues 245 to 268 (LSSLTSLDLSENHIVVLPNTIGGL), 269 to 291 (SSLTKLDLHSNRIGQLPESIGEL), 293 to 313 (NLVYLNLGSNQLSSLPSAFSR), 314 to 337 (LVRLEELDLSCNNLPILPESIGSL), 339 to 360 (SLKKLDVETNDIEEIPYSIGGC), 362 to 383 (SLIELRADYNKLKALPEAIGKI), 384 to 406 (TTLEILSVRYNNIRQLPTTMSSL), 407 to 430 (ASLKELDVSFNELESVPESLCFAT), 432 to 454 (LVKLNIGNNFADMVSLPRSIGNL), 455 to 476 (EMLEELDISNNQIRVLPDSFKM), and 478 to 500 (TKLRVFRAQENPLHIPPRDIAEK). Residues 501-508 (GPQAVVQY) carry the GVYW; degenerate motif.

The protein belongs to the SHOC2 family. Widely expressed.

In terms of biological role, leucine-rich repeat protein that likely mediates protein interactions, possibly in the context of signal transduction. The polypeptide is Plant intracellular Ras-group-related LRR protein 4 (PIRL4) (Arabidopsis thaliana (Mouse-ear cress)).